Here is a 445-residue protein sequence, read N- to C-terminus: Tubulin beta-4 chain (445 aa).

8 residues coordinate GTP: Q11, E69, S138, G142, T143, G144, N204, and N226. Position 69 (E69) interacts with Mg(2+). The disordered stretch occupies residues 421-445 (EYQQYQDATADEEYDEEEEEERDAE). Acidic residues predominate over residues 429-445 (TADEEYDEEEEEERDAE).

It belongs to the tubulin family. Dimer of alpha and beta chains. A typical microtubule is a hollow water-filled tube with an outer diameter of 25 nm and an inner diameter of 15 nM. Alpha-beta heterodimers associate head-to-tail to form protofilaments running lengthwise along the microtubule wall with the beta-tubulin subunit facing the microtubule plus end conferring a structural polarity. Microtubules usually have 13 protofilaments but different protofilament numbers can be found in some organisms and specialized cells. Mg(2+) is required as a cofactor.

The protein localises to the cytoplasm. The protein resides in the cytoskeleton. Its function is as follows. Tubulin is the major constituent of microtubules, a cylinder consisting of laterally associated linear protofilaments composed of alpha- and beta-tubulin heterodimers. Microtubules grow by the addition of GTP-tubulin dimers to the microtubule end, where a stabilizing cap forms. Below the cap, tubulin dimers are in GDP-bound state, owing to GTPase activity of alpha-tubulin. The sequence is that of Tubulin beta-4 chain (TUBB4) from Triticum aestivum (Wheat).